Here is a 582-residue protein sequence, read N- to C-terminus: Protein LYRIC (582 aa).

At 1–48 (MAARSWQDELAQQAEEGSARLREMLSVGLGFLRTELGLDLGLEPKRYP) the chain is on the lumenal side. Residues 1–71 (MAARSWQDEL…LLLFLLGYGW (71 aa)) form an activation of NF-kappa-B region. A helical transmembrane segment spans residues 49-69 (GWVILVGTGALGLLLLFLLGY). Topologically, residues 70-582 (GWAAACAGAR…KKKKKARRET (513 aa)) are cytoplasmic. An interaction with BCCIP region spans residues 72–169 (AAACAGARKK…EKSKKNKKKS (98 aa)). Positions 78–222 (ARKKRRSPPR…DSGSLDSTIP (145 aa)) are disordered. Low complexity predominate over residues 93 to 106 (AAVPAAAPDDLALL). The tract at residues 101–205 (DDLALLKNLR…ISHREKRQQR (105 aa)) is interaction with RELA. Positions 109-127 (LRSEEQKKKNRKKLSEKPK) are enriched in basic and acidic residues. A Phosphothreonine modification is found at Thr143. The segment covering 160 to 169 (EKSKKNKKKS) has biased composition (basic residues). The residue at position 180 (Ser180) is a Phosphoserine. Residues 198-208 (HREKRQQRKRD) are compositionally biased toward basic residues. Ser216 and Ser251 each carry phosphoserine. Lys264 is subject to N6-acetyllysine. Residues 280–582 (TVNGGGWNEK…KKKKKARRET (303 aa)) are disordered. Residues Ser298, Ser306, Ser308, Ser311, Ser323, Ser339, Ser344, and Ser369 each carry the phosphoserine modification. Polar residues predominate over residues 320–333 (SAWSQDTGDANTNG). Polar residues-rich tracts occupy residues 354–372 (EPVSQSTTSDYQWDVSRNQ) and 383–394 (NGLSSADPNSDW). The tract at residues 381 to 443 (GLNGLSSADP…EGALPTGKSK (63 aa)) is lung-homing for mammary tumors. 2 positions are modified to phosphoserine: Ser415 and Ser426. A compositionally biased stretch (basic and acidic residues) spans 421–434 (DDQKVSDDDKEKGE). The span at 441-451 (KSKKKKKKKKK) shows a compositional bias: basic residues. Position 457 is a phosphoserine (Ser457). Thr458 carries the post-translational modification Phosphothreonine. Residues Ser478, Ser494, and Ser496 each carry the phosphoserine modification. Composition is skewed to polar residues over residues 504 to 520 (KNSQPIKTLPPATSTEP) and 549 to 568 (NTKQNSVPPSQTKSETSWES). At Ser568 the chain carries Phosphoserine. The segment covering 571 to 582 (QIKKKKKARRET) has biased composition (basic residues).

In terms of assembly, interacts with BCCIP, CREBBP/CBP and RELA/p65. In terms of tissue distribution, widely expressed with highest levels in muscle-dominating organs such as skeletal muscle, heart, tongue and small intestine and in endocrine glands such as thyroid and adrenal gland. Overexpressed in various cancers including breast, brain, prostate, melanoma and glioblastoma multiforme.

It is found in the endoplasmic reticulum membrane. Its subcellular location is the nucleus membrane. The protein localises to the cell junction. The protein resides in the tight junction. It localises to the nucleus. It is found in the nucleolus. Its subcellular location is the cytoplasm. The protein localises to the perinuclear region. Functionally, down-regulates SLC1A2/EAAT2 promoter activity when expressed ectopically. Activates the nuclear factor kappa-B (NF-kappa-B) transcription factor. Promotes anchorage-independent growth of immortalized melanocytes and astrocytes which is a key component in tumor cell expansion. Promotes lung metastasis and also has an effect on bone and brain metastasis, possibly by enhancing the seeding of tumor cells to the target organ endothelium. Induces chemoresistance. The chain is Protein LYRIC (MTDH) from Homo sapiens (Human).